The following is a 702-amino-acid chain: Penicillin-binding protein activator LpoA (702 aa).

The N-terminal stretch at Met1 to Gly26 is a signal peptide. Cys27 is lipidated: N-palmitoyl cysteine. A lipid anchor (S-diacylglycerol cysteine) is attached at Cys27. Residues Gly327 to Pro378 form a disordered region. A compositionally biased stretch (low complexity) spans Ala330–Pro378.

It belongs to the LpoA family. As to quaternary structure, interacts with PBP1a.

It localises to the cell outer membrane. Regulator of peptidoglycan synthesis that is essential for the function of penicillin-binding protein 1A (PBP1a). In Klebsiella pneumoniae subsp. pneumoniae (strain ATCC 700721 / MGH 78578), this protein is Penicillin-binding protein activator LpoA.